A 162-amino-acid polypeptide reads, in one-letter code: Caveolin-2 (162 aa).

The Cytoplasmic segment spans residues 1–86 (MGLETEKADV…FEISKYVMYK (86 aa)). The residue at position 19 (tyrosine 19) is a Phosphotyrosine; by SRC. Serine 20 and serine 23 each carry phosphoserine. Residue tyrosine 27 is modified to Phosphotyrosine; by SRC. Serine 36 carries the phosphoserine modification. An intramembrane region (helical) is located at residues 87-107 (FLTVFLAIPLAFIAGILFATL). Residues 108–162 (SCLHIWILMPFVKTCLMVLPSVQTIWKSVTDVIIAPLCTSVGRCFSSVSLQLSQD) lie on the Cytoplasmic side of the membrane.

It belongs to the caveolin family. Monomer or homodimer. Interacts with CAV1; the interaction forms a stable heterooligomeric complex that is required for targeting to lipid rafts and for caveolae formation. Tyrosine phosphorylated forms do not form heterooligomers with the Tyr-19-phosphorylated form existing as a monomer or dimer, and the Tyr-27-form as a monomer only. Interacts (tyrosine phosphorylated form) with the SH2 domain-containing proteins, RASA1, NCK1 and SRC. Interacts (tyrosine phosphorylated form) with INSR, the interaction (Tyr-27-phosphorylated form) is increased on insulin stimulation. Interacts (Tyr-19 phosphorylated form) with MAPK1 (phosphorylated form); the interaction, promoted by insulin, leads to nuclear location and MAPK1 activation. Interacts with STAT3; the interaction is increased on insulin-induced tyrosine phosphorylation leading to STAT activation. In terms of processing, phosphorylated on serine and tyrosine residues. CAV1 promotes phosphorylation on Ser-23 which then targets the complex to the plasma membrane, lipid rafts and caveolae. Phosphorylation on Ser-36 appears to modulate mitosis in endothelial cells. Phosphorylation on both Tyr-19 and Tyr-27 is required for insulin-induced 'Ser-727' phosphorylation of STAT3 and its activation. Phosphorylation on Tyr-19 is required for insulin-induced phosphorylation of MAPK1 and DNA binding of STAT3. Tyrosine phosphorylation is induced by both EGF and insulin (By. similarity).

It localises to the nucleus. Its subcellular location is the cytoplasm. The protein localises to the golgi apparatus membrane. It is found in the cell membrane. The protein resides in the membrane. It localises to the caveola. In terms of biological role, may act as a scaffolding protein within caveolar membranes. Interacts directly with G-protein alpha subunits and can functionally regulate their activity. Acts as an accessory protein in conjunction with CAV1 in targeting to lipid rafts and driving caveolae formation. The Ser-36 phosphorylated form has a role in modulating mitosis in endothelial cells. Positive regulator of cellular mitogenesis of the MAPK signaling pathway. Required for the insulin-stimulated nuclear translocation and activation of MAPK1 and STAT3, and the subsequent regulation of cell cycle progression. This chain is Caveolin-2 (CAV2), found in Gorilla gorilla gorilla (Western lowland gorilla).